A 424-amino-acid chain; its full sequence is DNA primase DnaG (424 aa).

The Toprim domain occupies 171–245; the sequence is DDIIVVEGRA…DVDFVARAPP (75 aa). Mg(2+)-binding residues include E177, D219, and D221.

This sequence belongs to the archaeal DnaG primase family. As to quaternary structure, forms a ternary complex with MCM helicase and DNA. It depends on Mg(2+) as a cofactor.

The enzyme catalyses ssDNA + n NTP = ssDNA/pppN(pN)n-1 hybrid + (n-1) diphosphate.. In terms of biological role, RNA polymerase that catalyzes the synthesis of short RNA molecules used as primers for DNA polymerase during DNA replication. The chain is DNA primase DnaG from Methanocaldococcus jannaschii (strain ATCC 43067 / DSM 2661 / JAL-1 / JCM 10045 / NBRC 100440) (Methanococcus jannaschii).